Here is a 992-residue protein sequence, read N- to C-terminus: UPF0182 protein MT3285 (992 aa).

Helical transmembrane passes span Arg-17 to Ala-39, Leu-59 to Leu-81, Leu-113 to Ala-135, Leu-169 to Ile-191, Leu-212 to Leu-229, Val-255 to Ile-277, and Ile-284 to Ile-306. The interval Pro-906–Pro-938 is disordered. The segment covering Pro-912 to Pro-938 has biased composition (pro residues).

This sequence belongs to the UPF0182 family.

The protein localises to the cell membrane. The sequence is that of UPF0182 protein MT3285 from Mycobacterium tuberculosis (strain CDC 1551 / Oshkosh).